We begin with the raw amino-acid sequence, 61 residues long: uncharacterized protein (61 aa).

Helical transmembrane passes span 4 to 24 (IIAF…VASM) and 34 to 54 (SSVI…IMPM).

The protein localises to the cell membrane. This is an uncharacterized protein from Bacillus subtilis (strain 168).